We begin with the raw amino-acid sequence, 287 residues long: uncharacterized protein (287 aa).

In terms of domain architecture, HTH araC/xylS-type spans Trp-183–Ile-281. 2 consecutive DNA-binding regions (H-T-H motif) follow at residues Lys-200–Leu-221 and Met-248–Glu-271.

This is an uncharacterized protein from Bacillus subtilis (strain 168).